The chain runs to 88 residues: HssA/B-like protein 17 (88 aa).

This sequence belongs to the hssA/B family.

The protein is HssA/B-like protein 17 (hssl17) of Dictyostelium discoideum (Social amoeba).